Consider the following 1308-residue polypeptide: Spermatogenesis-associated protein 31F1B (1308 aa).

The chain crosses the membrane as a helical span at residues Phe-7–Ile-27. Disordered stretches follow at residues Ser-464–Pro-488, Ser-627–Gly-648, His-844–Leu-863, Pro-902–Gly-927, Phe-1005–Lys-1026, Gly-1084–Lys-1190, and Met-1204–Gln-1254. Pro residues predominate over residues Pro-465–Ser-478. Acidic residues predominate over residues Met-1107–Asp-1117.

The protein belongs to the SPATA31 family.

The protein resides in the membrane. This is Spermatogenesis-associated protein 31F1B from Mus musculus (Mouse).